Here is a 160-residue protein sequence, read N- to C-terminus: tRNA (cytidine(56)-2'-O)-methyltransferase (160 aa).

S-adenosyl-L-methionine is bound by residues Leu68, 94-98 (GAEKV), and 112-119 (IGNQPHSE).

It belongs to the aTrm56 family. As to quaternary structure, homodimer.

Its subcellular location is the cytoplasm. The enzyme catalyses cytidine(56) in tRNA + S-adenosyl-L-methionine = 2'-O-methylcytidine(56) in tRNA + S-adenosyl-L-homocysteine + H(+). Its function is as follows. Specifically catalyzes the AdoMet-dependent 2'-O-ribose methylation of cytidine at position 56 in tRNAs. The protein is tRNA (cytidine(56)-2'-O)-methyltransferase of Saccharolobus solfataricus (strain ATCC 35092 / DSM 1617 / JCM 11322 / P2) (Sulfolobus solfataricus).